Here is a 246-residue protein sequence, read N- to C-terminus: Bis(5'-nucleosyl)-tetraphosphatase PrpE [asymmetrical] (246 aa).

It belongs to the PrpE family. Ni(2+) is required as a cofactor.

It carries out the reaction P(1),P(4)-bis(5'-guanosyl) tetraphosphate + H2O = GMP + GTP + 2 H(+). Its function is as follows. Asymmetrically hydrolyzes Ap4p to yield AMP and ATP. In Bacillus cereus (strain ATCC 14579 / DSM 31 / CCUG 7414 / JCM 2152 / NBRC 15305 / NCIMB 9373 / NCTC 2599 / NRRL B-3711), this protein is Bis(5'-nucleosyl)-tetraphosphatase PrpE [asymmetrical].